Reading from the N-terminus, the 273-residue chain is Pantothenate synthetase (273 aa).

27–34 (MGALHAGH) serves as a coordination point for ATP. The Proton donor role is filled by histidine 34. Glutamine 58 provides a ligand contact to (R)-pantoate. Glutamine 58 contacts beta-alanine. 144 to 147 (GKKD) provides a ligand contact to ATP. Glutamine 150 contributes to the (R)-pantoate binding site. Residues valine 173 and 181 to 184 (LSSR) contribute to the ATP site.

The protein belongs to the pantothenate synthetase family. Homodimer.

It localises to the cytoplasm. The catalysed reaction is (R)-pantoate + beta-alanine + ATP = (R)-pantothenate + AMP + diphosphate + H(+). It participates in cofactor biosynthesis; (R)-pantothenate biosynthesis; (R)-pantothenate from (R)-pantoate and beta-alanine: step 1/1. Catalyzes the condensation of pantoate with beta-alanine in an ATP-dependent reaction via a pantoyl-adenylate intermediate. The polypeptide is Pantothenate synthetase (Campylobacter hominis (strain ATCC BAA-381 / DSM 21671 / CCUG 45161 / LMG 19568 / NCTC 13146 / CH001A)).